Consider the following 260-residue polypeptide: Putative ABC transporter ATP-binding protein PYRAB01300 (260 aa).

The ABC transporter domain maps to 2–234; it reads IEFKDVWFWY…DLRNFSLVEP (233 aa). Residue 34-41 coordinates ATP; that stretch reads GPNGSGKT.

The protein belongs to the ABC transporter superfamily.

The protein localises to the cell membrane. Probably part of an ABC transporter complex. Responsible for energy coupling to the transport system. The protein is Putative ABC transporter ATP-binding protein PYRAB01300 of Pyrococcus abyssi (strain GE5 / Orsay).